Reading from the N-terminus, the 314-residue chain is 4-hydroxy-3-methylbut-2-enyl diphosphate reductase (314 aa).

A [4Fe-4S] cluster-binding site is contributed by Cys12. The (2E)-4-hydroxy-3-methylbut-2-enyl diphosphate site is built by His43 and His81. Residues His43 and His81 each coordinate dimethylallyl diphosphate. Residues His43 and His81 each contribute to the isopentenyl diphosphate site. [4Fe-4S] cluster is bound at residue Cys103. His131 provides a ligand contact to (2E)-4-hydroxy-3-methylbut-2-enyl diphosphate. His131 provides a ligand contact to dimethylallyl diphosphate. Position 131 (His131) interacts with isopentenyl diphosphate. Glu133 acts as the Proton donor in catalysis. (2E)-4-hydroxy-3-methylbut-2-enyl diphosphate is bound at residue Thr170. Position 198 (Cys198) interacts with [4Fe-4S] cluster. The (2E)-4-hydroxy-3-methylbut-2-enyl diphosphate site is built by Ser226, Asn228, and Ser271. The dimethylallyl diphosphate site is built by Ser226, Asn228, and Ser271. Residues Ser226, Asn228, and Ser271 each coordinate isopentenyl diphosphate.

Belongs to the IspH family. It depends on [4Fe-4S] cluster as a cofactor.

The enzyme catalyses isopentenyl diphosphate + 2 oxidized [2Fe-2S]-[ferredoxin] + H2O = (2E)-4-hydroxy-3-methylbut-2-enyl diphosphate + 2 reduced [2Fe-2S]-[ferredoxin] + 2 H(+). The catalysed reaction is dimethylallyl diphosphate + 2 oxidized [2Fe-2S]-[ferredoxin] + H2O = (2E)-4-hydroxy-3-methylbut-2-enyl diphosphate + 2 reduced [2Fe-2S]-[ferredoxin] + 2 H(+). It functions in the pathway isoprenoid biosynthesis; dimethylallyl diphosphate biosynthesis; dimethylallyl diphosphate from (2E)-4-hydroxy-3-methylbutenyl diphosphate: step 1/1. It participates in isoprenoid biosynthesis; isopentenyl diphosphate biosynthesis via DXP pathway; isopentenyl diphosphate from 1-deoxy-D-xylulose 5-phosphate: step 6/6. Catalyzes the conversion of 1-hydroxy-2-methyl-2-(E)-butenyl 4-diphosphate (HMBPP) into a mixture of isopentenyl diphosphate (IPP) and dimethylallyl diphosphate (DMAPP). Acts in the terminal step of the DOXP/MEP pathway for isoprenoid precursor biosynthesis. The protein is 4-hydroxy-3-methylbut-2-enyl diphosphate reductase of Bacillus pumilus (strain SAFR-032).